A 682-amino-acid chain; its full sequence is Potassium-transporting ATPase ATP-binding subunit (682 aa).

4 helical membrane-spanning segments follow: residues 34-54 (PVMF…IAMA), 62-82 (ALFS…ANFA), 219-239 (IALT…TATL), and 254-274 (VLVA…LSAI). The active-site 4-aspartylphosphate intermediate is the Asp307. ATP-binding positions include Asp344, Glu348, 377-384 (FTAQSRMS), and Lys395. Positions 518 and 522 each coordinate Mg(2+). 3 consecutive transmembrane segments (helical) span residues 588 to 608 (FAII…LNIM), 616 to 636 (AILS…PLAL), and 662 to 682 (LLVP…CGLV).

The protein belongs to the cation transport ATPase (P-type) (TC 3.A.3) family. Type IA subfamily. In terms of assembly, the system is composed of three essential subunits: KdpA, KdpB and KdpC.

The protein resides in the cell inner membrane. It carries out the reaction K(+)(out) + ATP + H2O = K(+)(in) + ADP + phosphate + H(+). Part of the high-affinity ATP-driven potassium transport (or Kdp) system, which catalyzes the hydrolysis of ATP coupled with the electrogenic transport of potassium into the cytoplasm. This subunit is responsible for energy coupling to the transport system and for the release of the potassium ions to the cytoplasm. The sequence is that of Potassium-transporting ATPase ATP-binding subunit from Escherichia coli O81 (strain ED1a).